The primary structure comprises 342 residues: Isopentenyl-diphosphate delta-isomerase (342 aa).

Residue 11-12 participates in substrate binding; the sequence is RK. Residues S68, 69–71, S99, and N128 contribute to the FMN site; that span reads SMT. 99–101 is a substrate binding site; it reads SQR. Residue Q162 participates in substrate binding. Residue E163 participates in Mg(2+) binding. FMN-binding positions include K194, S219, T224, 275–277, and 296–297; these read GVR and AK.

This sequence belongs to the IPP isomerase type 2 family. Homooctamer. Dimer of tetramers. Requires FMN as cofactor. NADPH is required as a cofactor. It depends on Mg(2+) as a cofactor.

The protein resides in the cytoplasm. It carries out the reaction isopentenyl diphosphate = dimethylallyl diphosphate. In terms of biological role, involved in the biosynthesis of isoprenoids. Catalyzes the 1,3-allylic rearrangement of the homoallylic substrate isopentenyl (IPP) to its allylic isomer, dimethylallyl diphosphate (DMAPP). This is Isopentenyl-diphosphate delta-isomerase from Legionella pneumophila (strain Corby).